A 127-amino-acid polypeptide reads, in one-letter code: Aspartate 1-decarboxylase (127 aa).

Ser-25 acts as the Schiff-base intermediate with substrate; via pyruvic acid in catalysis. The residue at position 25 (Ser-25) is a Pyruvic acid (Ser). Thr-57 serves as a coordination point for substrate. Residue Tyr-58 is the Proton donor of the active site. 73-75 is a substrate binding site; it reads GAA.

Belongs to the PanD family. In terms of assembly, heterooctamer of four alpha and four beta subunits. Pyruvate is required as a cofactor. In terms of processing, is synthesized initially as an inactive proenzyme, which is activated by self-cleavage at a specific serine bond to produce a beta-subunit with a hydroxyl group at its C-terminus and an alpha-subunit with a pyruvoyl group at its N-terminus.

The protein localises to the cytoplasm. The catalysed reaction is L-aspartate + H(+) = beta-alanine + CO2. It functions in the pathway cofactor biosynthesis; (R)-pantothenate biosynthesis; beta-alanine from L-aspartate: step 1/1. Its function is as follows. Catalyzes the pyruvoyl-dependent decarboxylation of aspartate to produce beta-alanine. The chain is Aspartate 1-decarboxylase from Carboxydothermus hydrogenoformans (strain ATCC BAA-161 / DSM 6008 / Z-2901).